The chain runs to 358 residues: Phospho-N-acetylmuramoyl-pentapeptide-transferase (358 aa).

Helical transmembrane passes span F24 to V44, T73 to L93, N95 to D115, M134 to F154, E169 to V189, G197 to A217, G233 to W253, V261 to L281, I286 to V306, and K335 to L355.

This sequence belongs to the glycosyltransferase 4 family. MraY subfamily. The cofactor is Mg(2+).

The protein localises to the cell inner membrane. It carries out the reaction UDP-N-acetyl-alpha-D-muramoyl-L-alanyl-gamma-D-glutamyl-meso-2,6-diaminopimeloyl-D-alanyl-D-alanine + di-trans,octa-cis-undecaprenyl phosphate = di-trans,octa-cis-undecaprenyl diphospho-N-acetyl-alpha-D-muramoyl-L-alanyl-D-glutamyl-meso-2,6-diaminopimeloyl-D-alanyl-D-alanine + UMP. Its pathway is cell wall biogenesis; peptidoglycan biosynthesis. Its function is as follows. Catalyzes the initial step of the lipid cycle reactions in the biosynthesis of the cell wall peptidoglycan: transfers peptidoglycan precursor phospho-MurNAc-pentapeptide from UDP-MurNAc-pentapeptide onto the lipid carrier undecaprenyl phosphate, yielding undecaprenyl-pyrophosphoryl-MurNAc-pentapeptide, known as lipid I. This is Phospho-N-acetylmuramoyl-pentapeptide-transferase from Citrifermentans bemidjiense (strain ATCC BAA-1014 / DSM 16622 / JCM 12645 / Bem) (Geobacter bemidjiensis).